Consider the following 469-residue polypeptide: Alpha-2C adrenergic receptor (469 aa).

The tract at residues 1 to 29 (MDLQLTTNSTDSGDRGGSSNESLQRQPPS) is disordered. At 1 to 36 (MDLQLTTNSTDSGDRGGSSNESLQRQPPSQYSPAEV) the chain is on the extracellular side. Residues asparagine 8 and asparagine 20 are each glycosylated (N-linked (GlcNAc...) asparagine). Residues 37-62 (AGLAAVVSFLIVFTIVGNVLVVIAVL) form a helical membrane-spanning segment. Residues 63–73 (TSRALKAPQNL) lie on the Cytoplasmic side of the membrane. Residues 74–99 (FQVSLASADILVATLVMPFSLANELM) traverse the membrane as a helical segment. Over 100 to 109 (NYWYFGKVWC) the chain is Extracellular. The cysteines at positions 109 and 187 are disulfide-linked. The chain crosses the membrane as a helical span at residues 110-132 (VIYLALDVLFCTSSIVHLCAISL). The Cytoplasmic portion of the chain corresponds to 133-154 (DRYWSVTQAVEYNLKRTPRRIK). Residues 155-175 (GIIVTVWLISAVISFPPLISL) traverse the membrane as a helical segment. The Extracellular segment spans residues 176–194 (YRDPEDDLYPQCELNDETW). Residues 195-216 (YILSSCIGSFFAPCIIMVLVYV) form a helical membrane-spanning segment. Residues 217–386 (RIYRVAKLRT…RKVTQAREKR (170 aa)) lie on the Cytoplasmic side of the membrane. Disordered regions lie at residues 232-261 (KRTV…AAAA) and 279-353 (HHHH…SRLS). Over residues 279–296 (HHHHHLHHHHHHHHHQLR) the composition is skewed to basic residues. Residues 301–310 (LEDIELEESS) are compositionally biased toward acidic residues. A compositionally biased stretch (low complexity) spans 331–353 (RGFSFSFSSTKGGQSAGAGSRLS). Residues 387–407 (FTFVLAVVMGVFVVCWFPFFF) form a helical membrane-spanning segment. Residues 408–427 (TYSLYGICREACQVPETLFK) are Extracellular-facing. Residues 428–448 (FFFWIGYCNSSLNPVIYTIFN) traverse the membrane as a helical segment. Residues 449-469 (QDFRRSFKHILFKKKKKTSLQ) lie on the Cytoplasmic side of the membrane.

Belongs to the G-protein coupled receptor 1 family. Adrenergic receptor subfamily. ADRA2C sub-subfamily.

The protein localises to the cell membrane. Its function is as follows. Alpha-2 adrenergic receptors mediate the catecholamine-induced inhibition of adenylate cyclase through the action of G proteins. The protein is Alpha-2C adrenergic receptor (ADRA2C) of Didelphis virginiana (North American opossum).